We begin with the raw amino-acid sequence, 303 residues long: Aspartate carbamoyltransferase catalytic subunit (303 aa).

Carbamoyl phosphate-binding residues include Arg-54 and Thr-55. Lys-83 lines the L-aspartate pocket. Carbamoyl phosphate-binding residues include Arg-104, His-132, and Gln-135. L-aspartate-binding residues include Arg-164 and Arg-226. Carbamoyl phosphate is bound by residues Leu-265 and Pro-266.

This sequence belongs to the aspartate/ornithine carbamoyltransferase superfamily. ATCase family. Heterooligomer of catalytic and regulatory chains.

It catalyses the reaction carbamoyl phosphate + L-aspartate = N-carbamoyl-L-aspartate + phosphate + H(+). It functions in the pathway pyrimidine metabolism; UMP biosynthesis via de novo pathway; (S)-dihydroorotate from bicarbonate: step 2/3. Its function is as follows. Catalyzes the condensation of carbamoyl phosphate and aspartate to form carbamoyl aspartate and inorganic phosphate, the committed step in the de novo pyrimidine nucleotide biosynthesis pathway. This is Aspartate carbamoyltransferase catalytic subunit from Methanocorpusculum labreanum (strain ATCC 43576 / DSM 4855 / Z).